The sequence spans 333 residues: Adenosine deaminase (333 aa).

Residues His12 and His14 each coordinate Zn(2+). Substrate is bound by residues His14, Asp16, and Gly170. His197 is a binding site for Zn(2+). Glu200 acts as the Proton donor in catalysis. Asp278 serves as a coordination point for Zn(2+). Residue Asp279 participates in substrate binding.

It belongs to the metallo-dependent hydrolases superfamily. Adenosine and AMP deaminases family. Adenosine deaminase subfamily. Zn(2+) is required as a cofactor.

The enzyme catalyses adenosine + H2O + H(+) = inosine + NH4(+). It carries out the reaction 2'-deoxyadenosine + H2O + H(+) = 2'-deoxyinosine + NH4(+). Catalyzes the hydrolytic deamination of adenosine and 2-deoxyadenosine. This chain is Adenosine deaminase, found in Shigella dysenteriae serotype 1 (strain Sd197).